The following is a 1581-amino-acid chain: Mediator of RNA polymerase II transcription subunit 1 (1581 aa).

The interaction with the Mediator complex and THRA stretch occupies residues 1–670; it reads MKAQGETEES…YGSSPLERQN (670 aa). The interval 16-590 is interaction with ESR1; that stretch reads MSSLLERLHA…SIKDRHESVG (575 aa). Interaction with the Mediator complex regions lie at residues 108-212 and 215-390; these read FYVE…GYLT and SGGH…SLQG. Positions 405-644 are interaction with THRA; sequence PLILNLIRHQ…MAGNTKNHPM (240 aa). Residues 542-789 form an interaction with VDR region; the sequence is PASSPGYGMT…TDILSDIAEE (248 aa). Ser-588 is modified (phosphoserine). The LXXLL motif 1 motif lies at 604-608; it reads LTSLL. Disordered stretches follow at residues 609–705, 792–820, 874–893, and 948–1566; these read QITG…HQTE, KLPSTSDDCPAIGTPLRDSSSSGHSQSTL, SQSGFGEEYFDESSQSGDND, and EHHS…DFMI. A compositionally biased stretch (pro residues) spans 622–632; it reads PTPPHHTPPPV. The segment at 622-701 is interaction with PPARGC1A and THRA; sequence PTPPHHTPPP…SSRLPPEKPK (80 aa). The LXXLL motif 2 signature appears at 645–649; it reads LMNLL. The segment covering 655-675 has biased composition (polar residues); the sequence is QDFSTLYGSSPLERQNSSSGS. An interaction with ESR1 region spans residues 656–1066; that stretch reads DFSTLYGSSP…TPPIPKITIQ (411 aa). Ser-664 is modified (phosphoserine). The tract at residues 681–715 is interaction with GATA1; the sequence is CSGSNKTKKKKSSRLPPEKPKHQTEDDFQRELFSM. Over residues 696–705 the composition is skewed to basic and acidic residues; the sequence is PPEKPKHQTE. Position 795 is a phosphoserine (Ser-795). Thr-805 is subject to Phosphothreonine. A compositionally biased stretch (polar residues) spans 808–820; that stretch reads RDSSSSGHSQSTL. Residues 875 to 902 carry the Integrase domain-binding motif (IBM) motif; that stretch reads QSGFGEEYFDESSQSGDNDDFKGFASQA. Phosphoserine occurs at positions 887 and 953. The segment covering 963–974 has biased composition (basic and acidic residues); it reads LGKEKTQKRVKE. Residue Thr-1032 is modified to Phosphothreonine; by MAPK1 or MAPK3. The span at 1034–1045 shows a compositional bias: low complexity; the sequence is PTSTGGSKSPGS. Residues Thr-1051 and Thr-1057 each carry the phosphothreonine modification. Low complexity-rich tracts occupy residues 1078 to 1094 and 1101 to 1156; these read SSHSQYTSSGSVSSSGS and SSSS…PGSS. A Phosphoserine modification is found at Ser-1156. A compositionally biased stretch (polar residues) spans 1162-1195; sequence GLSSGSSSTKMKPQGKPSSLMNPSLSKPNISPSH. Lys-1177 bears the N6-acetyllysine mark. Ser-1207 is subject to Phosphoserine. Thr-1215 is subject to Phosphothreonine. Composition is skewed to low complexity over residues 1218-1227 and 1234-1293; these read SSKAKSPISS and MSGT…SKGK. Ser-1223 bears the Phosphoserine mark. The interval 1249–1421 is interaction with TP53; that stretch reads LGSSGSLSQK…KPGESSGEGL (173 aa). Phosphoserine is present on Ser-1302. The segment covering 1330–1345 has biased composition (polar residues); that stretch reads GVSTNSSSHPMSSKHN. Ser-1347 carries the post-translational modification Phosphoserine. The span at 1352–1364 shows a compositional bias: basic and acidic residues; it reads QGKREKSDKDKSK. 2 positions are modified to phosphoserine: Ser-1403 and Ser-1433. Composition is skewed to polar residues over residues 1425–1440 and 1448–1482; these read MASSKNYGSPLISGST and PSHSKSPAYTPQNLDSESESGSSIAEKSYQNSPSS. Phosphothreonine is present on Thr-1440. Thr-1457 is modified (phosphothreonine; by MAPK1 or MAPK3). Ser-1463, Ser-1465, Ser-1479, Ser-1481, and Ser-1482 each carry phosphoserine. The span at 1496-1505 shows a compositional bias: basic residues; the sequence is KHKKHKKEKK. Residues 1506 to 1522 are compositionally biased toward basic and acidic residues; that stretch reads KVKDKDRDRDRDKDRDK. N6-acetyllysine is present on Lys-1529. Positions 1533–1552 are enriched in polar residues; the sequence is WSKSPISSDQSLSMTSNTIL.

This sequence belongs to the Mediator complex subunit 1 family. As to quaternary structure, component of the Mediator complex, which is composed of MED1, MED4, MED6, MED7, MED8, MED9, MED10, MED11, MED12, MED13, MED13L, MED14, MED15, MED16, MED17, MED18, MED19, MED20, MED21, MED22, MED23, MED24, MED25, MED26, MED27, MED29, MED30, MED31, CCNC, CDK8 and CDC2L6/CDK11. The MED12, MED13, CCNC and CDK8 subunits form a distinct module termed the CDK8 module. Mediator containing the CDK8 module is less active than Mediator lacking this module in supporting transcriptional activation. Individual preparations of the Mediator complex lacking one or more distinct subunits have been variously termed ARC, CRSP, DRIP, PC2, SMCC and TRAP. This subunit specifically interacts with a number of nuclear receptors in a ligand-dependent fashion including AR, ESR1, ESR2, PPARA, PPARG, RORA, RXRA, RXRG, THRA, THRB and VDR. Interacts with CTNNB1, GABPA, GLI3, PPARGC1A and TP53. Interacts with YWHAH. Interacts with CLOCK; this interaction requires the presence of THRAP3. Interacts with GATA1 and CCAR1. Interacts with NR4A3. Interacts (via IBM motif) with PSIP1 (via IBD domain); phosphorylation increases its affinity for PSIP1. Interacts with USP22. In terms of processing, phosphorylated by MAPK1 or MAPK3 during G2/M phase which may enhance protein stability and promote entry into the nucleolus. Phosphorylation increases its interaction with PSIP1. Ubiquitously expressed.

Its subcellular location is the nucleus. Its function is as follows. Component of the Mediator complex, a coactivator involved in the regulated transcription of nearly all RNA polymerase II-dependent genes. Mediator functions as a bridge to convey information from gene-specific regulatory proteins to the basal RNA polymerase II transcription machinery. Mediator is recruited to promoters by direct interactions with regulatory proteins and serves as a scaffold for the assembly of a functional preinitiation complex with RNA polymerase II and the general transcription factors. Acts as a coactivator for GATA1-mediated transcriptional activation during erythroid differentiation of K562 erythroleukemia cells. The chain is Mediator of RNA polymerase II transcription subunit 1 (MED1) from Homo sapiens (Human).